Reading from the N-terminus, the 401-residue chain is Imidazolonepropionase (401 aa).

Residues His-70 and His-72 each coordinate Fe(3+). Positions 70 and 72 each coordinate Zn(2+). The 4-imidazolone-5-propanoate site is built by Arg-79, Tyr-142, and His-175. Tyr-142 is a binding site for N-formimidoyl-L-glutamate. His-238 contacts Fe(3+). Residue His-238 coordinates Zn(2+). Gln-241 provides a ligand contact to 4-imidazolone-5-propanoate. Asp-313 contacts Fe(3+). Residue Asp-313 coordinates Zn(2+). N-formimidoyl-L-glutamate is bound by residues Asn-315 and Gly-317. Thr-318 contacts 4-imidazolone-5-propanoate.

The protein belongs to the metallo-dependent hydrolases superfamily. HutI family. It depends on Zn(2+) as a cofactor. Fe(3+) serves as cofactor.

Its subcellular location is the cytoplasm. The enzyme catalyses 4-imidazolone-5-propanoate + H2O = N-formimidoyl-L-glutamate. Its pathway is amino-acid degradation; L-histidine degradation into L-glutamate; N-formimidoyl-L-glutamate from L-histidine: step 3/3. Its function is as follows. Catalyzes the hydrolytic cleavage of the carbon-nitrogen bond in imidazolone-5-propanoate to yield N-formimidoyl-L-glutamate. It is the third step in the universal histidine degradation pathway. This is Imidazolonepropionase from Xanthomonas euvesicatoria pv. vesicatoria (strain 85-10) (Xanthomonas campestris pv. vesicatoria).